The following is a 434-amino-acid chain: MQVSVETTQGLGRRVTITVDKDVIENAVKSELVSVAKKVRIDGFRKGKVPMTVVAQRYGASVRQDVLGDLMQRNFVDAIIKEKINPAGSPQYVPGEYKIGEDFTFSAEFEVYPEVELQGLDAIEVEKPVVEVTEADVDTMLETLRKQQATWKETDAAATAEDRATIDFSGSVDGEEFEGGKASDFVLAMGQGRMIPGFEEGVVGHKAGETFTIDVNFPEDYHAENLKGKAAKFDIVLKKVEERELPELTEEFIKRFGVEAGSLDGLRAEVRKNMQRELKGAVRNRVKTQAIDGLVKANDIDVPAALVDGEIDVLKRQAAQRFGGDEKQALELPRELFEEQAKRRVVVGLLLGEVIRTHELKADETRVNALIEEMASAYEDPSEVIEFYSKNNELMNNMRNVALEEQAVEAVLEKAKVTEKATNFQELMNQTATA.

Residues 161–246 enclose the PPIase FKBP-type domain; the sequence is EDRATIDFSG…LKKVEERELP (86 aa).

This sequence belongs to the FKBP-type PPIase family. Tig subfamily.

The protein resides in the cytoplasm. It carries out the reaction [protein]-peptidylproline (omega=180) = [protein]-peptidylproline (omega=0). In terms of biological role, involved in protein export. Acts as a chaperone by maintaining the newly synthesized protein in an open conformation. Functions as a peptidyl-prolyl cis-trans isomerase. This Erwinia tasmaniensis (strain DSM 17950 / CFBP 7177 / CIP 109463 / NCPPB 4357 / Et1/99) protein is Trigger factor.